Here is a 265-residue protein sequence, read N- to C-terminus: Cell adhesion molecule CEACAM7 (265 aa).

Residues 1–35 form the signal peptide; the sequence is MGSPSACPYRVCIPWQGLLLTASLLTFWNLPNSAQ. The 107-residue stretch at 36–142 folds into the Ig-like V-type domain; that stretch reads TNIDVVPFNV…EEVTRQFYVF (107 aa). N-linked (GlcNAc...) asparagine glycans are attached at residues asparagine 57, asparagine 85, asparagine 105, asparagine 112, asparagine 174, asparagine 183, and asparagine 198. In terms of domain architecture, Ig-like C2-type spans 146–233; it reads PKPSITSNNF…ASRSDPVTLN (88 aa). The cysteines at positions 168 and 216 are disulfide-linked. The GPI-anchor amidated serine moiety is linked to residue serine 242. Residues 243–265 constitute a propeptide, removed in mature form; sequence SPDLSAGTAVSIMIGVLAGMALI.

It belongs to the immunoglobulin superfamily. CEA family. As to quaternary structure, homodimer. As to expression, expressed in columnar epithelial cells of the colon (at protein level). Strongly down-regulated in colonic adenocarcinomas.

The protein resides in the cell membrane. It is found in the apical cell membrane. This Homo sapiens (Human) protein is Cell adhesion molecule CEACAM7.